An 813-amino-acid polypeptide reads, in one-letter code: Leucine--tRNA ligase (813 aa).

The short motif at 41 to 51 (PYPSGTLHMGH) is the 'HIGH' region element. A 'KMSKS' region motif is present at residues 575-579 (KMSKS). An ATP-binding site is contributed by Lys-578.

This sequence belongs to the class-I aminoacyl-tRNA synthetase family.

The protein resides in the cytoplasm. It carries out the reaction tRNA(Leu) + L-leucine + ATP = L-leucyl-tRNA(Leu) + AMP + diphosphate. In Francisella philomiragia subsp. philomiragia (strain ATCC 25017 / CCUG 19701 / FSC 153 / O#319-036), this protein is Leucine--tRNA ligase.